A 404-amino-acid chain; its full sequence is Formate-dependent phosphoribosylglycinamide formyltransferase (404 aa).

N(1)-(5-phospho-beta-D-ribosyl)glycinamide is bound by residues 25–26 and Glu85; that span reads EL. ATP-binding positions include Arg118, Lys159, 164 to 169, 199 to 202, and Glu207; these read SSGKGQ and EGFI. In terms of domain architecture, ATP-grasp spans 123–318; it reads RLAAEELGLP…EFELHARAIL (196 aa). 2 residues coordinate Mg(2+): Glu277 and Glu289. N(1)-(5-phospho-beta-D-ribosyl)glycinamide is bound by residues Asp296, Lys365, and 372-373; that span reads RR. Residues 384–404 are disordered; it reads TDEARSRAKQAAAAVRPVSAK. Positions 392–404 are enriched in low complexity; the sequence is KQAAAAVRPVSAK.

This sequence belongs to the PurK/PurT family. Homodimer.

The catalysed reaction is N(1)-(5-phospho-beta-D-ribosyl)glycinamide + formate + ATP = N(2)-formyl-N(1)-(5-phospho-beta-D-ribosyl)glycinamide + ADP + phosphate + H(+). It participates in purine metabolism; IMP biosynthesis via de novo pathway; N(2)-formyl-N(1)-(5-phospho-D-ribosyl)glycinamide from N(1)-(5-phospho-D-ribosyl)glycinamide (formate route): step 1/1. Its function is as follows. Involved in the de novo purine biosynthesis. Catalyzes the transfer of formate to 5-phospho-ribosyl-glycinamide (GAR), producing 5-phospho-ribosyl-N-formylglycinamide (FGAR). Formate is provided by PurU via hydrolysis of 10-formyl-tetrahydrofolate. This chain is Formate-dependent phosphoribosylglycinamide formyltransferase, found in Paraburkholderia xenovorans (strain LB400).